The following is a 185-amino-acid chain: Ribosome-recycling factor (185 aa).

It belongs to the RRF family.

It is found in the cytoplasm. Responsible for the release of ribosomes from messenger RNA at the termination of protein biosynthesis. May increase the efficiency of translation by recycling ribosomes from one round of translation to another. The chain is Ribosome-recycling factor from Geobacter metallireducens (strain ATCC 53774 / DSM 7210 / GS-15).